The chain runs to 232 residues: Rho-related GTP-binding protein Rho6 (232 aa).

GTP is bound by residues 23 to 28 (QCGKTA), 38 to 45 (YPETYVPT), 67 to 71 (DTSGS), 125 to 128 (CKTD), and 169 to 170 (AF). The Effector region motif lies at 42–50 (YVPTVFENY). Residue cysteine 229 is modified to Cysteine methyl ester. Residue cysteine 229 is the site of S-geranylgeranyl cysteine attachment. Residues 230-232 (SIM) constitute a propeptide, removed in mature form.

The protein belongs to the small GTPase superfamily. Rho family. In terms of assembly, binds GRB7 and PLXNB1. Interacts with PLXNA2. Interacts with UBXD5.

The protein localises to the cell membrane. It is found in the cytoplasm. It localises to the cytoskeleton. Functionally, lacks intrinsic GTPase activity. Has a low affinity for GDP, and constitutively binds GTP. Controls rearrangements of the actin cytoskeleton. Induces the Rac-dependent neuritic process formation in part by disruption of the cortical actin filaments. Causes the formation of many neuritic processes from the cell body with disruption of the cortical actin filaments. The polypeptide is Rho-related GTP-binding protein Rho6 (Rnd1) (Mus musculus (Mouse)).